The sequence spans 29 residues: Cytochrome b6-f complex subunit 8 (29 aa).

Residues 3-23 (IISIGWVSLMVVFTFSISLVV) traverse the membrane as a helical segment.

The protein belongs to the PetN family. The 4 large subunits of the cytochrome b6-f complex are cytochrome b6, subunit IV (17 kDa polypeptide, PetD), cytochrome f and the Rieske protein, while the 4 small subunits are PetG, PetL, PetM and PetN. The complex functions as a dimer.

The protein resides in the plastid. It localises to the chloroplast thylakoid membrane. Functionally, component of the cytochrome b6-f complex, which mediates electron transfer between photosystem II (PSII) and photosystem I (PSI), cyclic electron flow around PSI, and state transitions. The polypeptide is Cytochrome b6-f complex subunit 8 (Staurastrum punctulatum (Green alga)).